Here is a 204-residue protein sequence, read N- to C-terminus: dTTP/UTP pyrophosphatase (204 aa).

Aspartate 76 serves as the catalytic Proton acceptor.

It belongs to the Maf family. YhdE subfamily. The cofactor is a divalent metal cation.

It is found in the cytoplasm. The enzyme catalyses dTTP + H2O = dTMP + diphosphate + H(+). It catalyses the reaction UTP + H2O = UMP + diphosphate + H(+). In terms of biological role, nucleoside triphosphate pyrophosphatase that hydrolyzes dTTP and UTP. May have a dual role in cell division arrest and in preventing the incorporation of modified nucleotides into cellular nucleic acids. The polypeptide is dTTP/UTP pyrophosphatase (Salinibacter ruber (strain DSM 13855 / M31)).